The sequence spans 152 residues: Interleukin-1 family member 10 (152 aa).

This sequence belongs to the IL-1 family. As to quaternary structure, interacts with cargo receptor TMED10; the interaction mediates the translocation from the cytoplasm into the ERGIC (endoplasmic reticulum-Golgi intermediate compartment) and thereby secretion. In terms of tissue distribution, expressed in fetal skin, spleen and tonsil. Expressed mostly in the basal epithelia of skin and in proliferating B-cells of the tonsil.

The protein localises to the cytoplasm. The protein resides in the secreted. Its function is as follows. Cytokine with immunomodulatory activity. Alone, does not induce cytokine production, but reduces IL22 and IL17A production by T-cells in response to heat-killed Candida albicans. Reduces IL36G-induced production of IL8 by peripheral blood mononuclear cells. Increases IL6 production by dendritic cells stimulated by bacterial lipopolysaccharides (LPS). Ligand for IL-36R/IL1RL2. This chain is Interleukin-1 family member 10, found in Homo sapiens (Human).